A 121-amino-acid polypeptide reads, in one-letter code: Small ribosomal subunit protein bS16 (121 aa).

The disordered stretch occupies residues 88–121; the sequence is GKAKLEKEKKAKAKTKEEENEGSKTESGSNEAES. Over residues 90 to 111 the composition is skewed to basic and acidic residues; it reads AKLEKEKKAKAKTKEEENEGSK. Residues 112–121 are compositionally biased toward polar residues; it reads TESGSNEAES.

This sequence belongs to the bacterial ribosomal protein bS16 family.

The sequence is that of Small ribosomal subunit protein bS16 from Prochlorococcus marinus (strain MIT 9215).